Reading from the N-terminus, the 271-residue chain is 3-methyl-2-oxobutanoate hydroxymethyltransferase (271 aa).

Mg(2+) contacts are provided by D53 and D92. 3-methyl-2-oxobutanoate-binding positions include 53-54 (DS), D92, and K120. E122 serves as a coordination point for Mg(2+). The active-site Proton acceptor is E189.

Belongs to the PanB family. As to quaternary structure, homodecamer; pentamer of dimers. The cofactor is Mg(2+).

It localises to the cytoplasm. The catalysed reaction is 3-methyl-2-oxobutanoate + (6R)-5,10-methylene-5,6,7,8-tetrahydrofolate + H2O = 2-dehydropantoate + (6S)-5,6,7,8-tetrahydrofolate. The protein operates within cofactor biosynthesis; (R)-pantothenate biosynthesis; (R)-pantoate from 3-methyl-2-oxobutanoate: step 1/2. In terms of biological role, catalyzes the reversible reaction in which hydroxymethyl group from 5,10-methylenetetrahydrofolate is transferred onto alpha-ketoisovalerate to form ketopantoate. The sequence is that of 3-methyl-2-oxobutanoate hydroxymethyltransferase from Burkholderia vietnamiensis (strain G4 / LMG 22486) (Burkholderia cepacia (strain R1808)).